The sequence spans 2156 residues: MAM and LDL-receptor class A domain-containing protein 1 (2156 aa).

The signal sequence occupies residues 1-31 (MLFFLDRMLAFPMNETFCCLWIACVFNSTLA). Residues 32-2076 (QQGTESFQCD…FTYAQNNTWT (2045 aa)) lie on the Vesicular side of the membrane. Residues 33–68 (QGTESFQCDNGVSLPPDSICDFTDQCGDSSDERHCL) form the LDL-receptor class A 1 domain. Cystine bridges form between cysteine 40/cysteine 58 and cysteine 52/cysteine 67. 2 consecutive MAM domains span residues 71–229 (ERCD…GCLP) and 268–427 (QACG…ACGQ). One can recognise an LDL-receptor class A 2 domain in the interval 433–471 (LCSADEFPCTSGQCIAKESVCDSRQDCSDESDEDPATCS). Cystine bridges form between cysteine 434–cysteine 446, cysteine 441–cysteine 459, and cysteine 453–cysteine 470. 2 MAM domains span residues 474-637 (LTCD…ECEI) and 652-816 (SKCD…NCTL). An N-linked (GlcNAc...) asparagine glycan is attached at asparagine 813. One can recognise an LDL-receptor class A 3 domain in the interval 822 to 860 (SCEGLDHFWCRHTRACIEKLRLCDLVDDCGDRTDEVNCA). Intrachain disulfides connect cysteine 823–cysteine 837, cysteine 831–cysteine 850, and cysteine 844–cysteine 859. Positions 863-1024 (LQCNFETGIC…DDLSFMDCTL (162 aa)) constitute an MAM 5 domain. Asparagine 1049 carries N-linked (GlcNAc...) asparagine glycosylation. Positions 1049 to 1086 (NCTDNEFICRSDGHCIEKMQKCDFKYDCPDKSDEASCV) constitute an LDL-receptor class A 4 domain. 3 disulfide bridges follow: cysteine 1050-cysteine 1063, cysteine 1057-cysteine 1076, and cysteine 1070-cysteine 1085. The region spanning 1088 to 1256 (EVCSFEKRSL…DDISFQDCSP (169 aa)) is the MAM 6 domain. Residue asparagine 1199 is glycosylated (N-linked (GlcNAc...) asparagine). The 39-residue stretch at 1263–1301 (KCTDHEFMCANKHCIAKDKLCDFVNDCADNSDETTFICR) folds into the LDL-receptor class A 5 domain. Cystine bridges form between cysteine 1264–cysteine 1276, cysteine 1271–cysteine 1289, and cysteine 1283–cysteine 1300. The region spanning 1305–1465 (GRCDFEFDLC…DIVLTENCLS (161 aa)) is the MAM 7 domain. An N-linked (GlcNAc...) asparagine glycan is attached at asparagine 1414. An LDL-receptor class A 6 domain is found at 1482–1518 (FCPLGYRECHNGKCYRLEQSCNFVDNCGDNTDENECG). Cystine bridges form between cysteine 1483–cysteine 1495, cysteine 1490–cysteine 1508, and cysteine 1502–cysteine 1517. The region spanning 1519-1676 (SSCTFEKGWC…DDIEFKNCTT (158 aa)) is the MAM 8 domain. Positions 1683–1720 (LCPEITDFLCRDKKCIASHLLCDYKPDCSDRSDEAHCA) constitute an LDL-receptor class A 7 domain. Disulfide bonds link cysteine 1684/cysteine 1697, cysteine 1692/cysteine 1710, and cysteine 1704/cysteine 1719. The region spanning 1727–1892 (GSCNFETSSG…DISFTPECVT (166 aa)) is the MAM 9 domain. 3 consecutive LDL-receptor class A domains span residues 1902–1939 (PCEA…MDCP), 1946–1982 (LCSN…LICS), and 1985–2023 (SCSN…SSCS). Cystine bridges form between cysteine 1903-cysteine 1916, cysteine 1910-cysteine 1929, cysteine 1923-cysteine 1938, cysteine 1947-cysteine 1959, cysteine 1954-cysteine 1972, cysteine 1966-cysteine 1981, cysteine 1986-cysteine 1999, cysteine 1993-cysteine 2012, cysteine 2006-cysteine 2022, cysteine 2025-cysteine 2036, cysteine 2030-cysteine 2045, and cysteine 2047-cysteine 2056. The EGF-like domain occupies 2024 to 2057 (ECPLNYCRNGGTCVVEKNGPMCRCRQGWKGNRCH). The helical transmembrane segment at 2077-2097 (LLGIGLAFLMTHITVAVLCFL) threads the bilayer. The Cytoplasmic segment spans residues 2098 to 2156 (ANRKVPIRKTEGSGNCAFVNPVYGNWSNPEKTESSVYSFSNPLYGTTSGSLETLSHHLK).

As to quaternary structure, interacts with FGF19. Strongly expressed in the small intestine.

Its subcellular location is the cytoplasmic vesicle membrane. Functionally, enhances production and/or transport of FGF19 and thus has a role in regulation of bile acid synthesis. This is MAM and LDL-receptor class A domain-containing protein 1 from Homo sapiens (Human).